The following is a 336-amino-acid chain: UDP-N-acetylenolpyruvoylglucosamine reductase (336 aa).

Residues 17–188 form the FAD-binding PCMH-type domain; it reads GFDVRARYAS…TAVTLRLSRD (172 aa). The active site involves Arg-164. Ser-236 functions as the Proton donor in the catalytic mechanism. Glu-332 is a catalytic residue.

The protein belongs to the MurB family. Requires FAD as cofactor.

It localises to the cytoplasm. It carries out the reaction UDP-N-acetyl-alpha-D-muramate + NADP(+) = UDP-N-acetyl-3-O-(1-carboxyvinyl)-alpha-D-glucosamine + NADPH + H(+). Its pathway is cell wall biogenesis; peptidoglycan biosynthesis. Its function is as follows. Cell wall formation. The chain is UDP-N-acetylenolpyruvoylglucosamine reductase from Cupriavidus pinatubonensis (strain JMP 134 / LMG 1197) (Cupriavidus necator (strain JMP 134)).